The sequence spans 122 residues: Fluoride-specific ion channel FluC (122 aa).

The next 4 membrane-spanning stretches (helical) occupy residues 5–25, 29–49, 65–85, and 93–113; these read FLIGIGGFTGAVLRYVISGII, FGIPTGTLMVNLIGSFIVGFL, FIITGFCGALTTFSTFSYESF, and FIKSGINILTNVTGCISMIYF. Na(+) contacts are provided by Gly-72 and Thr-75.

It belongs to the fluoride channel Fluc/FEX (TC 1.A.43) family.

It is found in the cell membrane. It catalyses the reaction fluoride(in) = fluoride(out). Na(+) is not transported, but it plays an essential structural role and its presence is essential for fluoride channel function. Functionally, fluoride-specific ion channel. Important for reducing fluoride concentration in the cell, thus reducing its toxicity. The protein is Fluoride-specific ion channel FluC of Methanococcus vannielii (strain ATCC 35089 / DSM 1224 / JCM 13029 / OCM 148 / SB).